The sequence spans 412 residues: Imidazolonepropionase (412 aa).

Fe(3+) is bound by residues H76 and H78. The Zn(2+) site is built by H76 and H78. Residues R85, Y148, and H181 each contribute to the 4-imidazolone-5-propanoate site. Y148 contributes to the N-formimidoyl-L-glutamate binding site. H242 contributes to the Fe(3+) binding site. H242 contributes to the Zn(2+) binding site. E245 is a binding site for 4-imidazolone-5-propanoate. Position 317 (D317) interacts with Fe(3+). D317 contacts Zn(2+). The N-formimidoyl-L-glutamate site is built by N319 and G321. S322 lines the 4-imidazolone-5-propanoate pocket.

Belongs to the metallo-dependent hydrolases superfamily. HutI family. Zn(2+) is required as a cofactor. It depends on Fe(3+) as a cofactor.

It is found in the cytoplasm. It catalyses the reaction 4-imidazolone-5-propanoate + H2O = N-formimidoyl-L-glutamate. The protein operates within amino-acid degradation; L-histidine degradation into L-glutamate; N-formimidoyl-L-glutamate from L-histidine: step 3/3. Its function is as follows. Catalyzes the hydrolytic cleavage of the carbon-nitrogen bond in imidazolone-5-propanoate to yield N-formimidoyl-L-glutamate. It is the third step in the universal histidine degradation pathway. The chain is Imidazolonepropionase from Staphylococcus aureus (strain MSSA476).